Consider the following 375-residue polypeptide: Putative nuclease YhcG (375 aa).

Interacts with DNA processing enzymes, including the restriction complex HsdMRS, the integrases IntF and IntS, and the recombinase PinE.

Its function is as follows. May be a nuclease involved in DNA recombination and repair. This is Putative nuclease YhcG (yhcG) from Escherichia coli (strain K12).